The following is a 65-amino-acid chain: Small ribosomal subunit protein eS27 (65 aa).

Positions 21, 24, 40, and 43 each coordinate Zn(2+). Residues 21–43 (CRDCGNVQVVFARPSSTVTCNIC) form a C4-type zinc finger.

Belongs to the eukaryotic ribosomal protein eS27 family. In terms of assembly, part of the 30S ribosomal subunit. The cofactor is Zn(2+).

The protein is Small ribosomal subunit protein eS27 of Thermoplasma acidophilum (strain ATCC 25905 / DSM 1728 / JCM 9062 / NBRC 15155 / AMRC-C165).